A 289-amino-acid chain; its full sequence is Phospholipase A1 (289 aa).

Residues 1 to 20 form the signal peptide; sequence MRTLQGWLLPVFMLPMAVYA. The Periplasmic segment spans residues 21 to 52; the sequence is QEATVKEVHDAPAVRGSIIANMLQEHDNPFTL. A beta stranded transmembrane segment spans residues 53–65; that stretch reads YPYDTNYLIYTQT. Residues 66–84 are Extracellular-facing; it reads SDLNKEAIASYDWAENARK. The beta stranded transmembrane segment at 85-99 threads the bilayer; it reads DEVKFQLSLAFPLWR. The Periplasmic segment spans residues 100 to 105; that stretch reads GILGPN. A beta stranded transmembrane segment spans residues 106–118; sequence SVLGASYTQKSWW. The Extracellular portion of the chain corresponds to 119 to 128; that stretch reads QLSNSEESSP. Residue serine 126 coordinates Ca(2+). Residues 129 to 148 form a beta stranded membrane-spanning segment; sequence FRETNYEPQLFLGFATDYRF. Residues 149 to 150 are Periplasmic-facing; the sequence is AG. The beta stranded transmembrane segment at 151 to 164 threads the bilayer; it reads WTLRDVEMGYNHDS. Histidine 162 functions as the Proton acceptor in the catalytic mechanism. Serine 164 acts as the Nucleophile in catalysis. Over 165-173 the chain is Extracellular; that stretch reads NGRSDPTSR. Ca(2+)-binding residues include arginine 167 and serine 172. Residues 174–186 form a beta stranded membrane-spanning segment; the sequence is SWNRLYTRLMAEN. Residues 187–188 lie on the Periplasmic side of the membrane; that stretch reads GN. A beta stranded transmembrane segment spans residues 189–198; it reads WLVEVKPWYV. Over 199–216 the chain is Extracellular; that stretch reads VGNTDDNPDITKYMGYYQ. Aspartate 204 lines the Ca(2+) pocket. Residues 217-223 traverse the membrane as a beta stranded segment; it reads LKIGYHL. The Periplasmic segment spans residues 224–225; that stretch reads GD. Residues 226–234 form a beta stranded membrane-spanning segment; the sequence is AVLSAKGQY. The Extracellular segment spans residues 235–241; the sequence is NWNTGYG. Residues 242–250 traverse the membrane as a beta stranded segment; sequence GAELGLSYP. Topologically, residues 251-255 are periplasmic; it reads ITKHV. Residues 256 to 265 form a beta stranded membrane-spanning segment; the sequence is RLYTQVYSGY. Over 266–274 the chain is Extracellular; it reads GESLIDYNF. The beta stranded transmembrane segment at 275-286 threads the bilayer; it reads NQTRVGVGVMLN. Over 287–289 the chain is Periplasmic; it reads DLF.

This sequence belongs to the phospholipase A1 family. In terms of assembly, homodimer; dimerization is reversible, and the dimeric form is the active one. The cofactor is Ca(2+).

It localises to the cell outer membrane. The catalysed reaction is a 1,2-diacyl-sn-glycero-3-phosphocholine + H2O = a 2-acyl-sn-glycero-3-phosphocholine + a fatty acid + H(+). It carries out the reaction a 1,2-diacyl-sn-glycero-3-phosphocholine + H2O = a 1-acyl-sn-glycero-3-phosphocholine + a fatty acid + H(+). In terms of biological role, hydrolysis of phosphatidylcholine with phospholipase A2 (EC 3.1.1.4) and phospholipase A1 (EC 3.1.1.32) activities. The polypeptide is Phospholipase A1 (pldA) (Escherichia coli O157:H7).